The following is a 393-amino-acid chain: Short-chain dehydrogenase/reductase family 42E member 1 (393 aa).

The Proton acceptor role is filled by Tyr-152. NAD(+) is bound at residue Lys-156. Transmembrane regions (helical) follow at residues 282–302 and 371–391; these read LPLTLVYCFAFLTEMVHFILG and GLLVFLLIIAVLMWLPSSVIL.

The protein belongs to the 3-beta-HSD family.

The protein resides in the membrane. The chain is Short-chain dehydrogenase/reductase family 42E member 1 (SDR42E1) from Homo sapiens (Human).